We begin with the raw amino-acid sequence, 127 residues long: Riboflavin kinase (127 aa).

Position 10 to 15 (Gly10 to Lys15) interacts with CDP. Residues Thr39 and Asn41 each coordinate Mg(2+). Residues Thr96 and Glu104 each contribute to the FMN site. Ile109–Arg112 provides a ligand contact to CDP.

The protein belongs to the archaeal riboflavin kinase family. Mg(2+) is required as a cofactor.

The catalysed reaction is riboflavin + CTP = CDP + FMN + H(+). The protein operates within cofactor biosynthesis; FMN biosynthesis; FMN from riboflavin (CTP route): step 1/1. Catalyzes the CTP-dependent phosphorylation of riboflavin (vitamin B2) to form flavin mononucleotide (FMN). This is Riboflavin kinase from Methanococcus maripaludis (strain DSM 14266 / JCM 13030 / NBRC 101832 / S2 / LL).